The chain runs to 339 residues: Serine/threonine-protein kinase SRK2J (339 aa).

The 257-residue stretch at 4–260 (YEMVKDLGFG…LKEIKSHAWF (257 aa)) folds into the Protein kinase domain. ATP contacts are provided by residues 10–18 (LGFGNFGLA) and lysine 33. The Proton acceptor role is filled by aspartate 123. The disordered stretch occupies residues 308–339 (SRPVESLGSDKKDDDEEEYLDANDEEWYDDYA). Over residues 320 to 339 (DDDEEEYLDANDEEWYDDYA) the composition is skewed to acidic residues.

The protein belongs to the protein kinase superfamily. Ser/Thr protein kinase family. As to expression, expressed in seedlings.

It carries out the reaction L-seryl-[protein] + ATP = O-phospho-L-seryl-[protein] + ADP + H(+). The enzyme catalyses L-threonyl-[protein] + ATP = O-phospho-L-threonyl-[protein] + ADP + H(+). The polypeptide is Serine/threonine-protein kinase SRK2J (SRK2J) (Arabidopsis thaliana (Mouse-ear cress)).